The sequence spans 301 residues: Probable alpha-L-glutamate ligase 1 (301 aa).

One can recognise an ATP-grasp domain in the interval 104–287 (MQLMSRRGIG…VAGAIIDFVE (184 aa)). Residues lysine 141, 178-179 (EY), aspartate 187, and 211-213 (RSN) contribute to the ATP site. Mg(2+) is bound by residues aspartate 248, glutamate 260, and asparagine 262. The Mn(2+) site is built by aspartate 248, glutamate 260, and asparagine 262.

This sequence belongs to the RimK family. It depends on Mg(2+) as a cofactor. Mn(2+) is required as a cofactor.

This is Probable alpha-L-glutamate ligase 1 from Shewanella baltica (strain OS185).